A 190-amino-acid chain; its full sequence is dTTP/UTP pyrophosphatase (190 aa).

The active-site Proton acceptor is the Asp-68.

This sequence belongs to the Maf family. YhdE subfamily. The cofactor is a divalent metal cation.

It is found in the cytoplasm. It catalyses the reaction dTTP + H2O = dTMP + diphosphate + H(+). It carries out the reaction UTP + H2O = UMP + diphosphate + H(+). Nucleoside triphosphate pyrophosphatase that hydrolyzes dTTP and UTP. May have a dual role in cell division arrest and in preventing the incorporation of modified nucleotides into cellular nucleic acids. The chain is dTTP/UTP pyrophosphatase from Acholeplasma laidlawii (strain PG-8A).